The following is a 231-amino-acid chain: Ribose-5-phosphate isomerase A (231 aa).

Residues threonine 32–threonine 35, aspartate 85–aspartate 88, and lysine 98–glycine 101 contribute to the substrate site. The Proton acceptor role is filled by glutamate 107. A substrate-binding site is contributed by lysine 125.

The protein belongs to the ribose 5-phosphate isomerase family. In terms of assembly, homodimer.

The enzyme catalyses aldehydo-D-ribose 5-phosphate = D-ribulose 5-phosphate. It functions in the pathway carbohydrate degradation; pentose phosphate pathway; D-ribose 5-phosphate from D-ribulose 5-phosphate (non-oxidative stage): step 1/1. Its function is as follows. Catalyzes the reversible conversion of ribose-5-phosphate to ribulose 5-phosphate. The chain is Ribose-5-phosphate isomerase A from Burkholderia orbicola (strain MC0-3).